Consider the following 102-residue polypeptide: NADH-quinone oxidoreductase subunit K (102 aa).

A run of 3 helical transmembrane segments spans residues 5-25 (LGHF…GIFL), 31-51 (IVLL…FVAF), and 62-82 (IFVF…LALL).

It belongs to the complex I subunit 4L family. NDH-1 is composed of 14 different subunits. Subunits NuoA, H, J, K, L, M, N constitute the membrane sector of the complex.

It is found in the cell inner membrane. The catalysed reaction is a quinone + NADH + 5 H(+)(in) = a quinol + NAD(+) + 4 H(+)(out). In terms of biological role, NDH-1 shuttles electrons from NADH, via FMN and iron-sulfur (Fe-S) centers, to quinones in the respiratory chain. The immediate electron acceptor for the enzyme in this species is believed to be ubiquinone. Couples the redox reaction to proton translocation (for every two electrons transferred, four hydrogen ions are translocated across the cytoplasmic membrane), and thus conserves the redox energy in a proton gradient. The protein is NADH-quinone oxidoreductase subunit K of Variovorax paradoxus (strain S110).